Consider the following 901-residue polypeptide: Alanine--tRNA ligase (901 aa).

Residues His-600, His-604, Cys-704, and His-708 each coordinate Zn(2+).

It belongs to the class-II aminoacyl-tRNA synthetase family. It depends on Zn(2+) as a cofactor.

The protein localises to the cytoplasm. It carries out the reaction tRNA(Ala) + L-alanine + ATP = L-alanyl-tRNA(Ala) + AMP + diphosphate. Functionally, catalyzes the attachment of alanine to tRNA(Ala) in a two-step reaction: alanine is first activated by ATP to form Ala-AMP and then transferred to the acceptor end of tRNA(Ala). Also edits incorrectly charged Ser-tRNA(Ala) and Gly-tRNA(Ala) via its editing domain. The polypeptide is Alanine--tRNA ligase (Ignicoccus hospitalis (strain KIN4/I / DSM 18386 / JCM 14125)).